The sequence spans 93 residues: Cell division protein CrgA (93 aa).

Helical transmembrane passes span 31 to 51 (VWFV…LMVF) and 70 to 90 (LGPW…LLTM).

It belongs to the CrgA family.

It localises to the cell membrane. Involved in cell division. This chain is Cell division protein CrgA, found in Mycobacterium marinum (strain ATCC BAA-535 / M).